A 223-amino-acid polypeptide reads, in one-letter code: Imidazoleglycerol-phosphate dehydratase (223 aa).

This sequence belongs to the imidazoleglycerol-phosphate dehydratase family.

The catalysed reaction is D-erythro-1-(imidazol-4-yl)glycerol 3-phosphate = 3-(imidazol-4-yl)-2-oxopropyl phosphate + H2O. It participates in amino-acid biosynthesis; L-histidine biosynthesis; L-histidine from 5-phospho-alpha-D-ribose 1-diphosphate: step 6/9. The protein is Imidazoleglycerol-phosphate dehydratase (HIS3) of Zygosaccharomyces bailii.